Consider the following 205-residue polypeptide: Tic20 family protein Ycf60 (205 aa).

A run of 5 helical transmembrane segments spans residues 5-25 (LFVN…VILI), 54-74 (AISC…FGIV), 102-122 (LIGF…IIQI), 130-150 (IVQA…LTSL), and 163-183 (LADT…TDAL).

The protein belongs to the Tic20 family.

It localises to the plastid. The protein resides in the chloroplast membrane. In Cyanidium caldarium (Red alga), this protein is Tic20 family protein Ycf60 (ycf60).